Reading from the N-terminus, the 471-residue chain is 4-aminobutyrate aminotransferase (471 aa).

A pyridoxal 5'-phosphate-binding site is contributed by 135-136 (GA). Arg192 contributes to the substrate binding site. Lys326 carries the N6-(pyridoxal phosphate)lysine modification. Thr351 is a pyridoxal 5'-phosphate binding site.

Belongs to the class-III pyridoxal-phosphate-dependent aminotransferase family. In terms of assembly, homodimer and homotetramer. The cofactor is pyridoxal 5'-phosphate.

Its subcellular location is the cytoplasm. It catalyses the reaction 4-aminobutanoate + 2-oxoglutarate = succinate semialdehyde + L-glutamate. Functionally, required for the degradation of gamma-aminobutyric acid (GABA), which is important for utilization of GABA as nitrogen source and for oxidative stress tolerance. Deaminates GABA to succinate semialdehyde, which in turn is converted to succinate by the succinate-semialdehyde dehydrogenase UGA2. Cannot transaminate beta-alanine (BAL). This chain is 4-aminobutyrate aminotransferase (UGA1), found in Saccharomyces cerevisiae (strain ATCC 204508 / S288c) (Baker's yeast).